Reading from the N-terminus, the 517-residue chain is Putative transporter C543.05c (517 aa).

Transmembrane regions (helical) follow at residues 68–88, 93–113, 121–141, 155–175, 186–206, 217–237, 269–289, 311–331, 377–397, 403–423, and 449–471; these read SFGV…FALL, LCIV…YDIM, FPFL…IAIA, CEIF…QVLC, FLSI…DTVG, ILLL…FQHI, IPVG…ILFY, GFHW…ILGI, SNFI…LLVL, CVLA…NGIT, and RVVW…ITQV.

Belongs to the anion exchanger (TC 2.A.31) family.

Its subcellular location is the vacuole membrane. This is Putative transporter C543.05c from Schizosaccharomyces pombe (strain 972 / ATCC 24843) (Fission yeast).